The primary structure comprises 231 residues: 5'-methylthioadenosine/S-adenosylhomocysteine nucleosidase (231 aa).

E12 functions as the Proton acceptor in the catalytic mechanism. Substrate contacts are provided by residues G78, M153, and 174–175 (ME). The Proton donor role is filled by D198.

The protein belongs to the PNP/UDP phosphorylase family. MtnN subfamily.

The catalysed reaction is S-adenosyl-L-homocysteine + H2O = S-(5-deoxy-D-ribos-5-yl)-L-homocysteine + adenine. It catalyses the reaction S-methyl-5'-thioadenosine + H2O = 5-(methylsulfanyl)-D-ribose + adenine. The enzyme catalyses 5'-deoxyadenosine + H2O = 5-deoxy-D-ribose + adenine. It participates in amino-acid biosynthesis; L-methionine biosynthesis via salvage pathway; S-methyl-5-thio-alpha-D-ribose 1-phosphate from S-methyl-5'-thioadenosine (hydrolase route): step 1/2. Catalyzes the irreversible cleavage of the glycosidic bond in both 5'-methylthioadenosine (MTA) and S-adenosylhomocysteine (SAH/AdoHcy) to adenine and the corresponding thioribose, 5'-methylthioribose and S-ribosylhomocysteine, respectively. Also cleaves 5'-deoxyadenosine, a toxic by-product of radical S-adenosylmethionine (SAM) enzymes, into 5-deoxyribose and adenine. This Bacillus pumilus (strain SAFR-032) protein is 5'-methylthioadenosine/S-adenosylhomocysteine nucleosidase.